We begin with the raw amino-acid sequence, 27 residues long: Vasotocin-neurophysin VT (27 aa).

Residues C1 and C6 are joined by a disulfide bond. At G9 the chain carries Glycine amide.

It belongs to the vasopressin/oxytocin family.

Its function is as follows. Vasotocin is an antidiuretic hormone. This chain is Vasotocin-neurophysin VT, found in Sclerophrys regularis (Common African toad).